The chain runs to 188 residues: Accessory gene regulator protein B (188 aa).

4 helical membrane passes run Leu49 to Leu69, Ile104 to Ala126, Ile143 to Tyr163, and Phe166 to Glu186.

Belongs to the AgrB family.

It localises to the cell membrane. Its function is as follows. Essential for the production of a quorum sensing system signal molecule, the autoinducing peptide (AIP). This quorum sensing system is responsible for the regulation of the expression of virulence factor genes. Involved in the proteolytic processing of AgrD, the precursor of AIP. This chain is Accessory gene regulator protein B, found in Staphylococcus intermedius.